We begin with the raw amino-acid sequence, 538 residues long: CTP synthase (538 aa).

The tract at residues 1 to 266 is amidoligase domain; sequence MRTKYIFITG…DQKIVDLLNI (266 aa). S14 serves as a coordination point for CTP. S14 contributes to the UTP binding site. ATP contacts are provided by residues 15-20 and D72; that span reads SLGKGL. Positions 72 and 140 each coordinate Mg(2+). CTP-binding positions include 147-149, 187-192, and K223; these read DIE and KTKPTQ. UTP is bound by residues 187–192 and K223; that span reads KTKPTQ. 239–241 is an ATP binding site; sequence KDV. A Glutamine amidotransferase type-1 domain is found at 291–533; sequence NIAIVGKYVN…IEAALRYRKK (243 aa). G353 contacts L-glutamine. C380 functions as the Nucleophile; for glutamine hydrolysis in the catalytic mechanism. L-glutamine contacts are provided by residues 381-384, E404, and R461; that span reads LGMQ. Active-site residues include H506 and E508.

This sequence belongs to the CTP synthase family. In terms of assembly, homotetramer.

The enzyme catalyses UTP + L-glutamine + ATP + H2O = CTP + L-glutamate + ADP + phosphate + 2 H(+). It carries out the reaction L-glutamine + H2O = L-glutamate + NH4(+). The catalysed reaction is UTP + NH4(+) + ATP = CTP + ADP + phosphate + 2 H(+). The protein operates within pyrimidine metabolism; CTP biosynthesis via de novo pathway; CTP from UDP: step 2/2. With respect to regulation, allosterically activated by GTP, when glutamine is the substrate; GTP has no effect on the reaction when ammonia is the substrate. The allosteric effector GTP functions by stabilizing the protein conformation that binds the tetrahedral intermediate(s) formed during glutamine hydrolysis. Inhibited by the product CTP, via allosteric rather than competitive inhibition. Its function is as follows. Catalyzes the ATP-dependent amination of UTP to CTP with either L-glutamine or ammonia as the source of nitrogen. Regulates intracellular CTP levels through interactions with the four ribonucleotide triphosphates. The polypeptide is CTP synthase (Syntrophus aciditrophicus (strain SB)).